The primary structure comprises 801 residues: Phenylalanine--tRNA ligase beta subunit (801 aa).

The tRNA-binding domain occupies 39-153 (AEGLSKLVVG…EEAVPGDAIF (115 aa)). Residues 406 to 481 (TEPVEVSTSL…RIYGYDKLPT (76 aa)) form the B5 domain. Residues Asp-459, Asp-465, Glu-468, and Glu-469 each coordinate Mg(2+). In terms of domain architecture, FDX-ACB spans 708–801 (TKFPAMTRDI…LTEQVGAEVR (94 aa)).

It belongs to the phenylalanyl-tRNA synthetase beta subunit family. Type 1 subfamily. As to quaternary structure, tetramer of two alpha and two beta subunits. Mg(2+) is required as a cofactor.

Its subcellular location is the cytoplasm. The enzyme catalyses tRNA(Phe) + L-phenylalanine + ATP = L-phenylalanyl-tRNA(Phe) + AMP + diphosphate + H(+). This Streptococcus pyogenes serotype M18 (strain MGAS8232) protein is Phenylalanine--tRNA ligase beta subunit.